The sequence spans 271 residues: 3'-phosphoadenosine 5'-phosphate phosphatase (271 aa).

Mg(2+) contacts are provided by Glu-73, Asp-91, Leu-93, Asp-94, and Asp-216. Substrate is bound at residue Glu-73. Residues 93-96 and Asp-216 contribute to the substrate site; that span reads LDGT.

Belongs to the inositol monophosphatase superfamily. In terms of assembly, homodimer. Requires Mg(2+) as cofactor.

The enzyme catalyses adenosine 3',5'-bisphosphate + H2O = AMP + phosphate. It catalyses the reaction beta-D-fructose 1,6-bisphosphate + H2O = beta-D-fructose 6-phosphate + phosphate. The catalysed reaction is a myo-inositol phosphate + H2O = myo-inositol + phosphate. Its pathway is sulfur metabolism; sulfate assimilation. Its function is as follows. Phosphatase with a broad specificity. Its primary physiological function is to dephosphorylate 3'-phosphoadenosine 5'-phosphate (PAP) and 3'-phosphoadenosine 5'-phosphosulfate (PAPS). Thus, plays a role in mycobacterial sulfur metabolism, since it can serve as a key regulator of the sulfate assimilation pathway by controlling the pools of PAP and PAPS in the cell. To a lesser extent, is also able to hydrolyze inositol 1-phosphate (I-1-P), fructose 1,6-bisphosphate (FBP) (to fructose 6-phosphate (F-6-P)) and AMP in vitro, but this might not be significant in vivo. The polypeptide is 3'-phosphoadenosine 5'-phosphate phosphatase (cysQ) (Mycobacterium leprae (strain TN)).